The following is a 1214-amino-acid chain: Reverse gyrase (1214 aa).

The RG N-terminal-type zinc-finger motif lies at 1–37 (MKAIYRDMCPNCRGAITDERLAAKNPCDACLDEPISM). Zn(2+)-binding residues include cysteine 9, cysteine 12, cysteine 27, and cysteine 30. Residues glutamine 89 and 106 to 113 (APTGMGKS) each bind ATP. The Helicase ATP-binding domain occupies 93 to 252 (VKRIIKGKSF…WEIIKLKKQL (160 aa)). The DEAD box signature appears at 213–216 (DDVD). Residues 635-1214 (DLVKSALMIV…YEEILRYVKS (580 aa)) form a topoisomerase I region. The Toprim domain occupies 639 to 802 (SALMIVESPN…VIKRIEFHEV (164 aa)). Glutamate 645 serves as a coordination point for Mg(2+). The RG C-terminal-type zinc-finger motif lies at 719–748 (IKRCRDCGHQFVDWEEKGVCPRCGSRNVYD). Residues cysteine 722, cysteine 725, cysteine 738, and cysteine 741 each coordinate Zn(2+). Position 771 (aspartate 771) interacts with Mg(2+). The region spanning 818–1212 (NEDRVNAQLV…ELYEEILRYV (395 aa)) is the Topo IA-type catalytic domain. Catalysis depends on tyrosine 955, which acts as the O-(5'-phospho-DNA)-tyrosine intermediate.

It in the N-terminal section; belongs to the DEAD box helicase family. DDVD subfamily. The protein in the C-terminal section; belongs to the type IA topoisomerase family. In terms of assembly, monomer. Zn(2+) is required as a cofactor. Requires Mg(2+) as cofactor.

Its subcellular location is the cytoplasm. The catalysed reaction is ATP + H2O = ADP + phosphate + H(+). In terms of biological role, modifies the topological state of DNA by introducing positive supercoils in an ATP-dependent process. Increases the linking number in steps of +1. Binds to single-stranded DNA, transiently cleaves and then rejoins the ends, introducing a positive supercoil in the process. The scissile phosphodiester is attacked by the catalytic tyrosine of the enzyme, resulting in the formation of a DNA-(5'-phosphotyrosyl)-enzyme intermediate. Probably involved in rewinding DNA strands in regions of the chromosome that have opened up to allow replication, transcription, DNA repair and/or for DNA protection. The protein is Reverse gyrase of Pyrococcus furiosus (strain ATCC 43587 / DSM 3638 / JCM 8422 / Vc1).